We begin with the raw amino-acid sequence, 92 residues long: uncharacterized protein (92 aa).

This is an uncharacterized protein from Haemophilus influenzae (strain ATCC 51907 / DSM 11121 / KW20 / Rd).